Here is a 435-residue protein sequence, read N- to C-terminus: Sex peptide receptor (435 aa).

The Extracellular portion of the chain corresponds to 1-93 (MDNYTDVLYQ…PLEYAMPLYG (93 aa)). A helical membrane pass occupies residues 94 to 114 (YCMPFLLIITIISNSLIVLVL). The Cytoplasmic segment spans residues 115-124 (SKKSMATPTN). Residues 125-145 (FVLMGMAICDMLTVIFPAPGL) form a helical membrane-spanning segment. Topologically, residues 146–168 (WYMYTFGNHYKPLHPVSMCLAYS) are extracellular. The helical transmembrane segment at 169–189 (IFNEIMPAMCHTISVWLTLAL) threads the bilayer. Residues 190–211 (AVQRYIYVCHAPMARTWCTMPR) are Cytoplasmic-facing. Residues 212-229 (VRRCTAYIALLAFLHQLP) form a helical membrane-spanning segment. Topologically, residues 230-276 (RFFDRTYMPLVIEWNGSPTEVCHLETSMWVHDYIGVDLYYTSYYLFR) are extracellular. The chain crosses the membrane as a helical span at residues 277–297 (VLFVHLLPCIILVTLNILLFA). The Cytoplasmic portion of the chain corresponds to 298 to 327 (AMRQAQERRKLLFRENRKKECKKLRETNCT). A helical transmembrane segment spans residues 328-348 (TLMLIVVVSVFLLAEIPIAVV). Residues 349–368 (TAMHIVSSLIIEFLDYGLAN) lie on the Extracellular side of the membrane. Residues 369-389 (ICIMLTNFFLVFSYPINFGIY) form a helical membrane-spanning segment. Residues 390–435 (CGMSRQFRETFKEIFLGRLMAKKDSSTKYSIVNGARTCTNTNETVL) lie on the Cytoplasmic side of the membrane.

Belongs to the G-protein coupled receptor 1 family. In the female, expressed in the reproductive organs; strongly expressed in the spermathecae and the lower oviduct. No expression in the male reproductive organs. In the central nervous system of both sexes, it is expressed in the brain and ventral nerve cord (VNC); strongly expressed in the ventral regions of the suboesophageal ganglion, the cervical connective and in many nerve roots of the brain and VNC. Expressed in the s-LNvs and l-LNvs pdf neurons (at protein level).

The protein localises to the cell membrane. Receptor for two functionally unrelated ligands; SP (A70A) for controlling reproductive behaviors and MIP for controlling sleep behavior. MIP-SPR pathway functions as a sleep homeostat which perceives the need for sleep and stabilizes it by providing a slow-acting inhibitory input to the fly arousal system that involve the pigment dispersing factor (pdf) neurons. SP-SPR is one of the multiple SP pathways that induce female post-mating behavioral responses (PMR) such as the suppression of mating receptivity and initiation of egg laying. The PMR switch is achieved by mediating the synaptic output of neurons such as those expressing fruitless (fru), double sex (dsx) and pickpocket (ppk). In Drosophila melanogaster (Fruit fly), this protein is Sex peptide receptor.